A 42-amino-acid chain; its full sequence is Alpha-conotoxin VnIB (42 aa).

The propeptide occupies Ala-1–Arg-22. Cystine bridges form between Cys-25/Cys-31 and Cys-26/Cys-38. The residue at position 39 (Gly-39) is a Glycine amide.

The protein belongs to the conotoxin A superfamily. In terms of tissue distribution, expressed by the venom duct.

Its subcellular location is the secreted. Functionally, alpha-conotoxins act on postsynaptic membranes, they bind to the nicotinic acetylcholine receptors (nAChR) and thus inhibit them. This toxin potently and selectively inhibits human and rat alpha-6-beta-4/CHRNA6-CHRNB4 nAChR (IC(50)=12 nM on rat nAChR). It exhibits rapid binding and unbinding at this receptor. It also shows activity on rat alpha-6-beta-4/CHRNA6-CHRNB4 (IC(50)=12 nM), human alpha-6/alpha-3-beta-4 (CHRNA6/CHRNA3-CHRNB4) (IC(50)=5.3 nM), rat alpha-6/alpha-3-beta-4 (CHRNA6/CHRNA3-CHRNB4) (IC(50)=18 nM), rat alpha-3-beta-4/CHRNA3-CHRNB4 (IC(50)=320 nM), and rat alpha-6/alpha-3-beta-2-beta-3 (CHRNA6/CHRNA3-CHRNB2-CHRNB3) (IC(50)=4 uM). The sequence is that of Alpha-conotoxin VnIB from Conus ventricosus (Mediterranean cone).